The sequence spans 418 residues: Serine hydroxymethyltransferase (418 aa).

Residues L120 and 124-126 contribute to the (6S)-5,6,7,8-tetrahydrofolate site; that span reads GHL. N6-(pyridoxal phosphate)lysine is present on K229. 353–355 provides a ligand contact to (6S)-5,6,7,8-tetrahydrofolate; the sequence is SPF.

Belongs to the SHMT family. As to quaternary structure, homodimer. It depends on pyridoxal 5'-phosphate as a cofactor.

It is found in the cytoplasm. The catalysed reaction is (6R)-5,10-methylene-5,6,7,8-tetrahydrofolate + glycine + H2O = (6S)-5,6,7,8-tetrahydrofolate + L-serine. The protein operates within one-carbon metabolism; tetrahydrofolate interconversion. Its pathway is amino-acid biosynthesis; glycine biosynthesis; glycine from L-serine: step 1/1. Functionally, catalyzes the reversible interconversion of serine and glycine with tetrahydrofolate (THF) serving as the one-carbon carrier. This reaction serves as the major source of one-carbon groups required for the biosynthesis of purines, thymidylate, methionine, and other important biomolecules. Also exhibits THF-independent aldolase activity toward beta-hydroxyamino acids, producing glycine and aldehydes, via a retro-aldol mechanism. This chain is Serine hydroxymethyltransferase, found in Psychrobacter cryohalolentis (strain ATCC BAA-1226 / DSM 17306 / VKM B-2378 / K5).